Here is a 428-residue protein sequence, read N- to C-terminus: GTPase Obg (428 aa).

The 158-residue stretch at 1–158 (MFIDKAKVFI…LSIVLELKLL (158 aa)) folds into the Obg domain. The OBG-type G domain occupies 159–331 (ADVGLLGFPN…VIKEAARMLK (173 aa)). GTP contacts are provided by residues 165–172 (GFPNVGKS), 190–194 (FTTLK), 212–215 (DIPG), 282–285 (NKSD), and 312–314 (SAA). Residues Ser-172 and Thr-192 each coordinate Mg(2+). The OCT domain maps to 345 to 428 (MYIPEEKRFT…LNDFEFEYLL (84 aa)).

It belongs to the TRAFAC class OBG-HflX-like GTPase superfamily. OBG GTPase family. Monomer. Mg(2+) serves as cofactor.

The protein localises to the cytoplasm. Functionally, an essential GTPase which binds GTP, GDP and possibly (p)ppGpp with moderate affinity, with high nucleotide exchange rates and a fairly low GTP hydrolysis rate. Plays a role in control of the cell cycle, stress response, ribosome biogenesis and in those bacteria that undergo differentiation, in morphogenesis control. The polypeptide is GTPase Obg (Clostridium botulinum (strain Eklund 17B / Type B)).